Here is a 194-residue protein sequence, read N- to C-terminus: Fe/S biogenesis protein NfuA (194 aa).

C152 and C155 together coordinate [4Fe-4S] cluster.

This sequence belongs to the NfuA family. In terms of assembly, homodimer. [4Fe-4S] cluster serves as cofactor.

Functionally, involved in iron-sulfur cluster biogenesis. Binds a 4Fe-4S cluster, can transfer this cluster to apoproteins, and thereby intervenes in the maturation of Fe/S proteins. Could also act as a scaffold/chaperone for damaged Fe/S proteins. The polypeptide is Fe/S biogenesis protein NfuA (Pseudomonas fluorescens (strain Pf0-1)).